Reading from the N-terminus, the 218-residue chain is Imidazole glycerol phosphate synthase subunit HisH (218 aa).

The 205-residue stretch at 7–211 folds into the Glutamine amidotransferase type-1 domain; that stretch reads STVIIDTGCA…LALDKASLDA (205 aa). The Nucleophile role is filled by Cys82. Active-site residues include His186 and Glu188.

As to quaternary structure, heterodimer of HisH and HisF.

Its subcellular location is the cytoplasm. The catalysed reaction is 5-[(5-phospho-1-deoxy-D-ribulos-1-ylimino)methylamino]-1-(5-phospho-beta-D-ribosyl)imidazole-4-carboxamide + L-glutamine = D-erythro-1-(imidazol-4-yl)glycerol 3-phosphate + 5-amino-1-(5-phospho-beta-D-ribosyl)imidazole-4-carboxamide + L-glutamate + H(+). It carries out the reaction L-glutamine + H2O = L-glutamate + NH4(+). It functions in the pathway amino-acid biosynthesis; L-histidine biosynthesis; L-histidine from 5-phospho-alpha-D-ribose 1-diphosphate: step 5/9. IGPS catalyzes the conversion of PRFAR and glutamine to IGP, AICAR and glutamate. The HisH subunit catalyzes the hydrolysis of glutamine to glutamate and ammonia as part of the synthesis of IGP and AICAR. The resulting ammonia molecule is channeled to the active site of HisF. This Shewanella sediminis (strain HAW-EB3) protein is Imidazole glycerol phosphate synthase subunit HisH.